Reading from the N-terminus, the 311-residue chain is Homoserine kinase (311 aa).

88-98 (PEGLGLGSSGA) serves as a coordination point for ATP.

It belongs to the GHMP kinase family. Homoserine kinase subfamily.

It is found in the cytoplasm. The catalysed reaction is L-homoserine + ATP = O-phospho-L-homoserine + ADP + H(+). Its pathway is amino-acid biosynthesis; L-threonine biosynthesis; L-threonine from L-aspartate: step 4/5. In terms of biological role, catalyzes the ATP-dependent phosphorylation of L-homoserine to L-homoserine phosphate. This is Homoserine kinase from Saccharolobus islandicus (strain Y.N.15.51 / Yellowstone #2) (Sulfolobus islandicus).